Reading from the N-terminus, the 266-residue chain is Interleukin-1 beta (266 aa).

A propeptide spanning residues 1 to 113 (MATVPEPINE…ETSSDELLCD (113 aa)) is cleaved from the precursor.

It belongs to the IL-1 family. As to quaternary structure, monomer. In its precursor form, weakly interacts with full-length MEFV; the mature cytokine does not interact at all. Interacts with integrins ITGAV:ITGBV and ITGA5:ITGB1; integrin-binding is required for IL1B signaling. Interacts with cargo receptor TMED10; the interaction is direct and is required for the secretion of IL1B mature form. Interacts with HSP90AB1; the interaction facilitates cargo translocation into the ERGIC. Interacts with HSP90B1; the interaction facilitates cargo translocation into the ERGIC.

It localises to the cytoplasm. The protein localises to the cytosol. The protein resides in the secreted. It is found in the lysosome. Its subcellular location is the extracellular exosome. Potent pro-inflammatory cytokine. Initially discovered as the major endogenous pyrogen, induces prostaglandin synthesis, neutrophil influx and activation, T-cell activation and cytokine production, B-cell activation and antibody production, and fibroblast proliferation and collagen production. Promotes Th17 differentiation of T-cells. Synergizes with IL12/interleukin-12 to induce IFNG synthesis from T-helper 1 (Th1) cells. Plays a role in angiogenesis by inducing VEGF production synergistically with TNF and IL6. Involved in transduction of inflammation downstream of pyroptosis: its mature form is specifically released in the extracellular milieu by passing through the gasdermin-D (GSDMD) pore. This is Interleukin-1 beta (IL1B) from Ovis aries (Sheep).